The sequence spans 94 residues: Large ribosomal subunit protein eL42 (94 aa).

Zn(2+) contacts are provided by Cys-11, Cys-14, Cys-71, and Cys-74. A C4-type zinc finger spans residues 11 to 74; it reads CPFCKRHTIH…LDLRFRCTVC (64 aa).

Belongs to the eukaryotic ribosomal protein eL42 family. In terms of assembly, part of the 50S ribosomal subunit. The cofactor is Zn(2+).

Its function is as follows. Binds to the 23S rRNA. The protein is Large ribosomal subunit protein eL42 of Thermococcus kodakarensis (strain ATCC BAA-918 / JCM 12380 / KOD1) (Pyrococcus kodakaraensis (strain KOD1)).